We begin with the raw amino-acid sequence, 577 residues long: Phosphoenolpyruvate-protein phosphotransferase (577 aa).

The active-site Tele-phosphohistidine intermediate is His191. Residues Arg298 and Arg334 each contribute to the phosphoenolpyruvate site. 2 residues coordinate Mg(2+): Glu435 and Asp459. Phosphoenolpyruvate-binding positions include 458–459 (ND) and Arg469. Cys506 serves as the catalytic Proton donor.

Belongs to the PEP-utilizing enzyme family. In terms of assembly, homodimer. Mg(2+) is required as a cofactor.

The protein resides in the cytoplasm. The enzyme catalyses L-histidyl-[protein] + phosphoenolpyruvate = N(pros)-phospho-L-histidyl-[protein] + pyruvate. Functionally, general (non sugar-specific) component of the phosphoenolpyruvate-dependent sugar phosphotransferase system (sugar PTS). This major carbohydrate active-transport system catalyzes the phosphorylation of incoming sugar substrates concomitantly with their translocation across the cell membrane. Enzyme I transfers the phosphoryl group from phosphoenolpyruvate (PEP) to the phosphoryl carrier protein (HPr). This Streptococcus equinus (Streptococcus bovis) protein is Phosphoenolpyruvate-protein phosphotransferase (ptsI).